A 1167-amino-acid chain; its full sequence is MFARGQKIDRRYYGKDVPNFMELPNLIDIQIQSYNKFLNKEKKTDETEIEGLESVFHTTFPIESTNEDMALQYLSYSLDYDSIKFSEIECKQKGLTYSVPLKAEIDLFFKETKEIRRKNIYMGDIPLMTERGTFIINGAERVVVSQIHRSPGVIFSHEKGVYSSRIIPYRGTWLEFEIDQKKELIYAKLDSKKRILGTIFLRALGYDTREKIIDLFYKTKTAKISPDRTEYEELIGQVLARDVYVKGEDGEKRKMHQAGEKIHPHNIDDLIQNDVKKITIIDFKGKDSLDSQIIINCFEREEIKYTPDPAVNDEPTVEDALNAVYSVIRPGDPITYENAKEDLHNMFFTARRYDIGKVGRYKLNKKFDYSDDVKGTTLIEEDIFKTMKFLIKVYIGEESIDDIDHLGNRRIRSVGEIMTDVLKKAFSRMERIARDRMSSKEMDTIKPKDLISIKPIVAAIKEFFGASQLSQFMDQVNPLAELTHKRRLNALGPGGLSRDRAGFEVREVHYTHYGRMCPIETPEGPNIGLIVSMANYARVNEYGFLEAPYVKVVNGVATREIEYLSAMDEDKYFIGQVSSAIGKDGKINTDQVSCRKLGDYTSISPKDIQYMDVSPKQIISVSASLIPFLEHDDANRALMGSNMQRQAVPLVFPEPPRVGTGMEKKCAYDSGVLVKAKRSGKVEFVSSDTIIIAPEKGKNKEDKDEYTLLKYQRTNQETCYHQRPIVNVGDTVKAGQPIADGPATYNGELALGRNILVGFVPWNGYNYEDAILISRRVVKEDMFTSIHIKELSTDVRETKLGAEKMTCDIPNKSEKSLDDLDSEGIIRIGSKVKPGDILVGKVTPKSESDTTPEFKLLNSIFGEKAKEVRDTSLRVPHGTEGTVIDVQRLKRDQGDDLSPGVDEVVKVLIATKRKLREGDKMAGRHGNKGLVARILPEEDMPYMEDGTPLDICLNPLGVPSRMNIGQILESELGLAGLKLNEWYESPVFESPSMEQIEAKLKEAGYPTSSKVKLRDGLTGRLFENEVFVGVIYFLKLAHLVDDKMHARSTGPYSLVTQQPLGGKAQFGGQRLGEMEVWALEAYGAANTLQELITIKSDDMHGRSKIYESIVKGEPSSSAGIPESFNVLVQELRGLALDFTIYDAKGQQIPLTERDEELIKREKTSTNF.

This sequence belongs to the RNA polymerase beta chain family. As to quaternary structure, the RNAP catalytic core consists of 2 alpha, 1 beta, 1 beta' and 1 omega subunit. When a sigma factor is associated with the core the holoenzyme is formed, which can initiate transcription.

It carries out the reaction RNA(n) + a ribonucleoside 5'-triphosphate = RNA(n+1) + diphosphate. In terms of biological role, DNA-dependent RNA polymerase catalyzes the transcription of DNA into RNA using the four ribonucleoside triphosphates as substrates. In Treponema denticola (strain ATCC 35405 / DSM 14222 / CIP 103919 / JCM 8153 / KCTC 15104), this protein is DNA-directed RNA polymerase subunit beta.